Reading from the N-terminus, the 375-residue chain is Succinyl-diaminopimelate desuccinylase (375 aa).

H66 provides a ligand contact to Zn(2+). The active site involves D68. Residue D99 coordinates Zn(2+). The active-site Proton acceptor is E133. Zn(2+) contacts are provided by E134, E162, and H348.

It belongs to the peptidase M20A family. DapE subfamily. Homodimer. Zn(2+) is required as a cofactor. Requires Co(2+) as cofactor.

It carries out the reaction N-succinyl-(2S,6S)-2,6-diaminopimelate + H2O = (2S,6S)-2,6-diaminopimelate + succinate. Its pathway is amino-acid biosynthesis; L-lysine biosynthesis via DAP pathway; LL-2,6-diaminopimelate from (S)-tetrahydrodipicolinate (succinylase route): step 3/3. Functionally, catalyzes the hydrolysis of N-succinyl-L,L-diaminopimelic acid (SDAP), forming succinate and LL-2,6-diaminopimelate (DAP), an intermediate involved in the bacterial biosynthesis of lysine and meso-diaminopimelic acid, an essential component of bacterial cell walls. The chain is Succinyl-diaminopimelate desuccinylase from Salmonella agona (strain SL483).